Here is a 366-residue protein sequence, read N- to C-terminus: 2-aminoethylphosphonate--pyruvate transaminase (366 aa).

Lys194 carries the N6-(pyridoxal phosphate)lysine modification.

It belongs to the class-V pyridoxal-phosphate-dependent aminotransferase family. PhnW subfamily. Homodimer. It depends on pyridoxal 5'-phosphate as a cofactor.

It carries out the reaction (2-aminoethyl)phosphonate + pyruvate = phosphonoacetaldehyde + L-alanine. In terms of biological role, involved in phosphonate degradation. In Lactiplantibacillus plantarum (strain ATCC BAA-793 / NCIMB 8826 / WCFS1) (Lactobacillus plantarum), this protein is 2-aminoethylphosphonate--pyruvate transaminase.